Consider the following 193-residue polypeptide: Riboflavin kinase (193 aa).

The tract at residues 1–59 is H-T-H motif-like; the sequence is MGISQQAASQHLRELEDEGLITRNAEGKGISVMVTDKGRHELLRVYNILHDSLHSRPDH. Residues 60 to 193 form a riboflavin kinase region; it reads VEITGTLVSG…TIRIPLEQED (134 aa). 69–74 serves as a coordination point for CDP; the sequence is GMNEGA. Positions 98 and 100 each coordinate Mg(2+). The FMN site is built by T156 and E164. 169-172 provides a ligand contact to CDP; it reads LDIR.

The protein belongs to the archaeal riboflavin kinase family. The cofactor is Mg(2+).

It catalyses the reaction riboflavin + CTP = CDP + FMN + H(+). Its pathway is cofactor biosynthesis; FMN biosynthesis; FMN from riboflavin (CTP route): step 1/1. Catalyzes the CTP-dependent phosphorylation of riboflavin (vitamin B2) to form flavin mononucleotide (FMN). This is Riboflavin kinase (ribK) from Cenarchaeum symbiosum (strain A).